Consider the following 2061-residue polypeptide: Myoferlin (2061 aa).

The C2 1 domain maps to 1 to 101 (MLRVIVESAS…TGDQSRSLPY (101 aa)). At 1–2025 (MLRVIVESAS…MKFIVWRRFK (2025 aa)) the chain is on the cytoplasmic side. Residues 123-172 (GYDPPSAPHPNDLSGPSVPGMGGDGEEDEGDEDRLDNAVRGPGPKGPVGT) form a disordered region. Positions 146–156 (DGEEDEGDEDR) are enriched in acidic residues. The residue at position 174 (Ser-174) is a Phosphoserine. C2 domains lie at 181-300 (RLTK…RKWL) and 339-474 (DSDD…VEDF). The tract at residues 186–281 (KNSRRMLSNK…RADCLMGEFK (96 aa)) is necessary for interaction with EHD2. Residues 323-342 (LGTGDEPPPERRDRDNDSDD) are disordered. Positions 390, 396, 444, 446, and 452 each coordinate Ca(2+). Position 553 is an N6-acetyllysine (Lys-553). Ser-729 bears the Phosphoserine mark. An N6-acetyllysine modification is found at Lys-884. The interval 938–967 (ESRYPGGDWKPAEDTYTDANGDKAASPSEL) is disordered. C2 domains lie at 1123 to 1251 (GANT…LLWH) and 1282 to 1410 (LPPQ…GKED). The Ca(2+) site is built by Asp-1155, Asp-1161, Asp-1217, and Asp-1219. N6-acetyllysine is present on Lys-1507. C2 domains follow at residues 1536-1654 (PAPP…SHCG) and 1772-1920 (GPPG…EKCR). Residues Asp-1569, Asp-1575, Asp-1624, Asp-1626, Asp-1891, Ser-1894, and Asp-1897 each contribute to the Ca(2+) site. Ser-1915 is subject to Phosphoserine. A helical transmembrane segment spans residues 2026-2046 (WVIIGLLFLLILLLFVAVLLY). The Extracellular portion of the chain corresponds to 2047 to 2061 (SLPNYLSMKIVKPNV).

The protein belongs to the ferlin family. In terms of assembly, interacts with DNM2 and KDR. Interacts with EHD1. Interacts with EHD2; the interaction is direct. Interacts with RIPOR2. Requires Ca(2+) as cofactor. Expressed in myoblast and endothelial cells (at protein level). Highly expressed in cardiac and skeletal muscles. Also present in lung, and at very low levels in kidney, placenta and brain.

Its subcellular location is the cell membrane. It is found in the nucleus membrane. The protein localises to the cytoplasmic vesicle membrane. Calcium/phospholipid-binding protein that plays a role in the plasmalemma repair mechanism of endothelial cells that permits rapid resealing of membranes disrupted by mechanical stress. Involved in endocytic recycling. Implicated in VEGF signal transduction by regulating the levels of the receptor KDR. In Homo sapiens (Human), this protein is Myoferlin (MYOF).